The primary structure comprises 331 residues: Mitochondrial respiration co-chaperone MRJ1 (331 aa).

A mitochondrion-targeting transit peptide spans 1 to 36; it reads MLSFQATVRPLAVSSRLHSPAAHIWRRNAHTAAMSD. The tract at residues 35 to 66 is disordered; sequence SDDSLDQGSSSSYGDSASQPHLGKGKGRQDSL. Residues 40–53 are compositionally biased toward low complexity; the sequence is DQGSSSSYGDSASQ. The 65-residue stretch at 83–147 folds into the J domain; the sequence is DPFEVMALDR…SSRSAFLKTG (65 aa). Residues 203–226 form a disordered region; sequence DGSQGWRPYEDPSKGFSPPTSGPA. The IQ domain maps to 275-303; the sequence is RALAQARYEAATHGHIRREQIRRRVREAE.

This sequence belongs to the DnaJ family. Interacts with QCR2.

It is found in the mitochondrion. In terms of biological role, mitochondrial co-chaperone required for ubiquinol-cytochrome c oxidoreductase (mitochondrial respiratory chain complex III) activity. The protein is Mitochondrial respiration co-chaperone MRJ1 of Cryptococcus neoformans var. grubii serotype A (strain H99 / ATCC 208821 / CBS 10515 / FGSC 9487) (Filobasidiella neoformans var. grubii).